Consider the following 119-residue polypeptide: Holo-[acyl-carrier-protein] synthase (119 aa).

The Mg(2+) site is built by D8 and E59.

This sequence belongs to the P-Pant transferase superfamily. AcpS family. The cofactor is Mg(2+).

Its subcellular location is the cytoplasm. The enzyme catalyses apo-[ACP] + CoA = holo-[ACP] + adenosine 3',5'-bisphosphate + H(+). Functionally, transfers the 4'-phosphopantetheine moiety from coenzyme A to a Ser of acyl-carrier-protein. The chain is Holo-[acyl-carrier-protein] synthase from Staphylococcus aureus (strain JH1).